A 370-amino-acid chain; its full sequence is Anhydro-N-acetylmuramic acid kinase (370 aa).

Residue 13-20 (GTSMDGVD) participates in ATP binding.

This sequence belongs to the anhydro-N-acetylmuramic acid kinase family.

It catalyses the reaction 1,6-anhydro-N-acetyl-beta-muramate + ATP + H2O = N-acetyl-D-muramate 6-phosphate + ADP + H(+). The protein operates within amino-sugar metabolism; 1,6-anhydro-N-acetylmuramate degradation. It participates in cell wall biogenesis; peptidoglycan recycling. In terms of biological role, catalyzes the specific phosphorylation of 1,6-anhydro-N-acetylmuramic acid (anhMurNAc) with the simultaneous cleavage of the 1,6-anhydro ring, generating MurNAc-6-P. Is required for the utilization of anhMurNAc either imported from the medium or derived from its own cell wall murein, and thus plays a role in cell wall recycling. The protein is Anhydro-N-acetylmuramic acid kinase of Vibrio vulnificus (strain YJ016).